Reading from the N-terminus, the 181-residue chain is BURP domain-containing protein 7 (181 aa).

A signal peptide spans 1 to 21 (MARSLAALLLLLVAAAGDSHA). One can recognise a BURP domain in the interval 65–181 (FFLEKDLFPG…RRGRRTGWRP (117 aa)). The disordered stretch occupies residues 112–181 (QLSVPAGSPA…RRGRRTGWRP (70 aa)). The segment covering 128-143 (RPRRSPARRSNARRRS) has biased composition (basic residues). Positions 144–157 (SPWWSSPRPASAPA) are enriched in low complexity. Basic residues predominate over residues 170-181 (GRRRGRRTGWRP).

In terms of tissue distribution, expressed in roots, stems, leaves and shoot.

This chain is BURP domain-containing protein 7 (BURP7), found in Oryza sativa subsp. japonica (Rice).